The primary structure comprises 90 residues: Putative membrane protein insertion efficiency factor (90 aa).

It belongs to the UPF0161 family.

The protein resides in the cell membrane. Could be involved in insertion of integral membrane proteins into the membrane. The chain is Putative membrane protein insertion efficiency factor from Oceanobacillus iheyensis (strain DSM 14371 / CIP 107618 / JCM 11309 / KCTC 3954 / HTE831).